Reading from the N-terminus, the 392-residue chain is Mycofactocin maturase MftC (392 aa).

Positions 18 to 228 (LDAPICLTWE…YDWLVAKGDR (211 aa)) constitute a Radical SAM core domain. The [4Fe-4S] cluster site is built by Cys-32, Cys-36, Cys-39, Cys-253, Cys-260, Cys-271, Cys-312, Cys-315, Cys-321, Cys-325, and Cys-343. A compositionally biased stretch (basic and acidic residues) spans 354–367 (KERVKPKPSGDHSR). Residues 354-377 (KERVKPKPSGDHSRGTKQGPVALK) form a disordered region.

It belongs to the radical SAM superfamily. MftC family. The cofactor is [4Fe-4S] cluster.

It carries out the reaction [mycofactocin precursor peptide]-C-terminal glycyl-L-valyl-L-tyrosine + S-adenosyl-L-methionine = [mycofactocin precursor peptide]-C-terminal glycyl-N-{[2-(4-hydroxyphenyl)ethenyl]-3-methylbutanamide} + 5'-deoxyadenosine + L-methionine + CO2. It catalyses the reaction [mycofactocin precursor peptide]-C-terminal glycyl-N-{[2-(4-hydroxyphenyl)ethenyl]-3-methylbutanamide} + AH2 + S-adenosyl-L-methionine = [mycofactocin precursor peptide]-C-terminal glycyl-N-{5-[(4-hydroxyphenyl)methyl]-4,4-dimethyl-2-oxopyrrolidin-3-yl}acetamide + 5'-deoxyadenosine + L-methionine + A + H(+). In terms of biological role, radical S-adenosylmethionine (SAM) enzyme responsible for the first step of the biosynthesis of the enzyme cofactor mycofactocin (MFT). Catalyzes two reactions at the C-terminus of the mycofactocin precursor (the MftA peptide). The first one is the oxidative decarboxylation of the C-terminal L-tyrosine of MftA, forming an unsaturated tyramine moiety. The second reaction is the cross-linking of the tyramine with the penultimate L-valine residue, forming a five-membered lactam ring. Its activity requires the presence of the MftB chaperone. Is required for the in vivo ethanol assimilation in M.smegmatis. This chain is Mycofactocin maturase MftC, found in Mycolicibacterium smegmatis (strain ATCC 700084 / mc(2)155) (Mycobacterium smegmatis).